A 101-amino-acid chain; its full sequence is UPF0125 protein VC_0850 (101 aa).

It belongs to the UPF0125 (RnfH) family.

The chain is UPF0125 protein VC_0850 from Vibrio cholerae serotype O1 (strain ATCC 39315 / El Tor Inaba N16961).